The following is a 251-amino-acid chain: Adenosine 5'-phosphosulfate reductase (251 aa).

[4Fe-4S] cluster-binding residues include C121, C122, C204, and C207. The active-site Nucleophile; cysteine thiosulfonate intermediate is the C232.

It belongs to the PAPS reductase family. CysH subfamily. [4Fe-4S] cluster is required as a cofactor.

It is found in the cytoplasm. It carries out the reaction [thioredoxin]-disulfide + sulfite + AMP + 2 H(+) = adenosine 5'-phosphosulfate + [thioredoxin]-dithiol. It participates in sulfur metabolism; hydrogen sulfide biosynthesis; sulfite from sulfate. Catalyzes the formation of sulfite from adenosine 5'-phosphosulfate (APS) using thioredoxin as an electron donor. This Sinorhizobium fredii (strain NBRC 101917 / NGR234) protein is Adenosine 5'-phosphosulfate reductase.